Reading from the N-terminus, the 326-residue chain is Target of rapamycin complex subunit LST8 (326 aa).

At M1 the chain carries N-acetylmethionine. 5 WD repeats span residues 1–37 (MNTT…CTRT), 40–80 (HQDS…PIIS), 83–122 (GVSK…LQCQ), 126–165 (QVNA…NEQL), and 168–207 (EPEF…GDEV). T51 carries the phosphothreonine modification. A Glycyl lysine isopeptide (Lys-Gly) (interchain with G-Cter in SUMO3) cross-link involves residue K86. Residues K215, K245, and K261 each participate in a glycyl lysine isopeptide (Lys-Gly) (interchain with G-Cter in SUMO3) cross-link. One copy of the WD 6 repeat lies at 218 to 257 (AHTRYALQCRFSPDSTLLATCSADQTCKIWRTSNFSLMTE). The WD 7 repeat unit spans residues 268 to 309 (SSRGWMWGCAFSGDSQYIVTASSDNLARLWCVETGEIKREYG). K305 is covalently cross-linked (Glycyl lysine isopeptide (Lys-Gly) (interchain with G-Cter in SUMO3); alternate). Glycyl lysine isopeptide (Lys-Gly) (interchain with G-Cter in ubiquitin); alternate cross-links involve residues K305 and K313. K313 is covalently cross-linked (Glycyl lysine isopeptide (Lys-Gly) (interchain with G-Cter in SUMO1); alternate).

This sequence belongs to the WD repeat LST8 family. Part of the mechanistic target of rapamycin complex 1 (mTORC1) which contains MTOR, MLST8 and RPTOR. mTORC1 associates with AKT1S1/PRAS40, which inhibits its activity. mTORC1 binds to and is inhibited by FKBP12-rapamycin. Within mTORC1, interacts directly with MTOR and RPTOR. Component of the mechanistic target of rapamycin complex 2 (mTORC2), consisting in two heterotretramers composed of MTOR, MLST8, RICTOR and MAPKAP1/SIN1. Contrary to mTORC1, mTORC2 does not bind to and is not sensitive to FKBP12-rapamycin. mTORC1 and mTORC2 associate with DEPTOR, which regulates their activity. Interacts with RHEB. Interacts with MEAK7. Interacts with SIK3. Interacts with SLC38A7; this interaction promotes the recruitment of mTORC1 to the lysosome and its subsequent activation. Phosphorylation at Thr-51 by CDK1 promotes ubiquitination by the SCF(FBXW7) complex, followed by degradation. Post-translationally, ubiquitination by the SCF(FBXW7) and SCF(FBXW11) complexes following phosphorylation at Thr-51 by CDK1, leads to its degradation by the proteasome. Ubiquitination at Lys-305 and Lys-313 by TRAF2 via 'Lys-63'-linked polyubiquitin chains inhibits formation of the mTORC2 complex, while promoting formation of the mTORC1 complex: ubiquitination disrupts the interaction between MLST8 and MAPKAP1/SIN1 to favor mTORC1 assembly. Deubiquitination at Lys-305 and Lys-313 by OTUD7B promotes MLST8 interaction with MAPKAP1/SIN1, facilitating mTORC2 assembly. In terms of processing, sumoylation with SUMO1, SUMO2 and SUMO3 promotes assembly of both mTORC1 and mTORC2 complexes. As to expression, expressed at highest levels in the brain and testis, followed by lung, heart, kidney, skeletal muscle, spleen and liver. Also expressed in epididymal, abdominal and brown fat, small intestine and pancreas.

It localises to the lysosome membrane. The protein resides in the cytoplasm. Functionally, subunit of both mTORC1 and mTORC2, which regulates cell growth and survival in response to nutrient and hormonal signals. mTORC1 is activated in response to growth factors or amino acids. In response to nutrients, mTORC1 is recruited to the lysosome membrane and promotes protein, lipid and nucleotide synthesis by phosphorylating several substrates, such as ribosomal protein S6 kinase (RPS6KB1 and RPS6KB2) and EIF4EBP1 (4E-BP1). In the same time, it inhibits catabolic pathways by phosphorylating the autophagy initiation components ULK1 and ATG13, as well as transcription factor TFEB, a master regulators of lysosomal biogenesis and autophagy. The mTORC1 complex is inhibited in response to starvation and amino acid depletion. Within mTORC1, MLST8 interacts directly with MTOR and enhances its kinase activity. In nutrient-poor conditions, stabilizes the MTOR-RPTOR interaction and favors RPTOR-mediated inhibition of MTOR activity. As part of the mTORC2 complex, transduces signals from growth factors to pathways involved in proliferation, cytoskeletal organization, lipogenesis and anabolic output. mTORC2 is also activated by growth factors, but seems to be nutrient-insensitive. In response to growth factors, mTORC2 phosphorylates and activates AGC protein kinase family members, including AKT (AKT1, AKT2 and AKT3), PKC (PRKCA, PRKCB and PRKCE) and SGK1. mTORC2 functions upstream of Rho GTPases to regulate the actin cytoskeleton, probably by activating one or more Rho-type guanine nucleotide exchange factors. mTORC2 promotes the serum-induced formation of stress-fibers or F-actin. mTORC2 plays a critical role in AKT1 activation by mediating phosphorylation of different sites depending on the context, such as 'Thr-450', 'Ser-473', 'Ser-477' or 'Thr-479', facilitating the phosphorylation of the activation loop of AKT1 on 'Thr-308' by PDPK1/PDK1 which is a prerequisite for full activation. mTORC2 regulates the phosphorylation of SGK1 at 'Ser-422'. mTORC2 also modulates the phosphorylation of PRKCA on 'Ser-657'. Within mTORC2, MLST8 acts as a bridge between MAPKAP1/SIN1 and MTOR. In Rattus norvegicus (Rat), this protein is Target of rapamycin complex subunit LST8.